A 163-amino-acid chain; its full sequence is ATP synthase subunit b (163 aa).

The helical transmembrane segment at 9–29 (GLLIAQLINVVFVVWLLTTFL) threads the bilayer.

Belongs to the ATPase B chain family. As to quaternary structure, F-type ATPases have 2 components, F(1) - the catalytic core - and F(0) - the membrane proton channel. F(1) has five subunits: alpha(3), beta(3), gamma(1), delta(1), epsilon(1). F(0) has four main subunits: a(1), b(2) and c(10-14). The alpha and beta chains form an alternating ring which encloses part of the gamma chain. F(1) is attached to F(0) by a central stalk formed by the gamma and epsilon chains, while a peripheral stalk is formed by the delta and b chains.

It is found in the cell membrane. Its function is as follows. F(1)F(0) ATP synthase produces ATP from ADP in the presence of a proton or sodium gradient. F-type ATPases consist of two structural domains, F(1) containing the extramembraneous catalytic core and F(0) containing the membrane proton channel, linked together by a central stalk and a peripheral stalk. During catalysis, ATP synthesis in the catalytic domain of F(1) is coupled via a rotary mechanism of the central stalk subunits to proton translocation. Functionally, component of the F(0) channel, it forms part of the peripheral stalk, linking F(1) to F(0). The protein is ATP synthase subunit b of Roseiflexus castenholzii (strain DSM 13941 / HLO8).